A 281-amino-acid chain; its full sequence is tRNA dimethylallyltransferase (281 aa).

Interaction with substrate tRNA stretches follow at residues 13–16 (DSAQ) and 133–137 (QRITR).

Belongs to the IPP transferase family. In terms of assembly, monomer. It depends on Mg(2+) as a cofactor.

The catalysed reaction is adenosine(37) in tRNA + dimethylallyl diphosphate = N(6)-dimethylallyladenosine(37) in tRNA + diphosphate. Its function is as follows. Catalyzes the transfer of a dimethylallyl group onto the adenine at position 37 in tRNAs that read codons beginning with uridine, leading to the formation of N6-(dimethylallyl)adenosine (i(6)A). The sequence is that of tRNA dimethylallyltransferase from Novosphingobium aromaticivorans (strain ATCC 700278 / DSM 12444 / CCUG 56034 / CIP 105152 / NBRC 16084 / F199).